A 233-amino-acid polypeptide reads, in one-letter code: Octanoyltransferase (233 aa).

The 181-residue stretch at 38 to 218 (AGGPDTLLLL…AVCDALDGVL (181 aa)) folds into the BPL/LPL catalytic domain. Basic and acidic residues predominate over residues 57–66 (RRTEPHERPL). Positions 57-77 (RRTEPHERPLDGTPVVDTDRG) are disordered. Substrate-binding positions include 76 to 83 (RGGKITWH), 148 to 150 (AIG), and 161 to 163 (GFA). Cysteine 179 acts as the Acyl-thioester intermediate in catalysis.

Belongs to the LipB family.

The protein localises to the cytoplasm. It catalyses the reaction octanoyl-[ACP] + L-lysyl-[protein] = N(6)-octanoyl-L-lysyl-[protein] + holo-[ACP] + H(+). Its pathway is protein modification; protein lipoylation via endogenous pathway; protein N(6)-(lipoyl)lysine from octanoyl-[acyl-carrier-protein]: step 1/2. In terms of biological role, catalyzes the transfer of endogenously produced octanoic acid from octanoyl-acyl-carrier-protein onto the lipoyl domains of lipoate-dependent enzymes. Lipoyl-ACP can also act as a substrate although octanoyl-ACP is likely to be the physiological substrate. This Mycolicibacterium paratuberculosis (strain ATCC BAA-968 / K-10) (Mycobacterium paratuberculosis) protein is Octanoyltransferase.